The primary structure comprises 258 residues: Thiazole synthase (258 aa).

Lys98 serves as the catalytic Schiff-base intermediate with DXP. Residues Gly159, 185-186 (AG), and 207-208 (NT) each bind 1-deoxy-D-xylulose 5-phosphate.

The protein belongs to the ThiG family. In terms of assembly, homotetramer. Forms heterodimers with either ThiH or ThiS.

It localises to the cytoplasm. It carries out the reaction [ThiS sulfur-carrier protein]-C-terminal-Gly-aminoethanethioate + 2-iminoacetate + 1-deoxy-D-xylulose 5-phosphate = [ThiS sulfur-carrier protein]-C-terminal Gly-Gly + 2-[(2R,5Z)-2-carboxy-4-methylthiazol-5(2H)-ylidene]ethyl phosphate + 2 H2O + H(+). Its pathway is cofactor biosynthesis; thiamine diphosphate biosynthesis. In terms of biological role, catalyzes the rearrangement of 1-deoxy-D-xylulose 5-phosphate (DXP) to produce the thiazole phosphate moiety of thiamine. Sulfur is provided by the thiocarboxylate moiety of the carrier protein ThiS. In vitro, sulfur can be provided by H(2)S. The polypeptide is Thiazole synthase (Cytophaga hutchinsonii (strain ATCC 33406 / DSM 1761 / CIP 103989 / NBRC 15051 / NCIMB 9469 / D465)).